The chain runs to 233 residues: 2-C-methyl-D-erythritol 4-phosphate cytidylyltransferase (233 aa).

This sequence belongs to the IspD/TarI cytidylyltransferase family. IspD subfamily.

It carries out the reaction 2-C-methyl-D-erythritol 4-phosphate + CTP + H(+) = 4-CDP-2-C-methyl-D-erythritol + diphosphate. It functions in the pathway isoprenoid biosynthesis; isopentenyl diphosphate biosynthesis via DXP pathway; isopentenyl diphosphate from 1-deoxy-D-xylulose 5-phosphate: step 2/6. Catalyzes the formation of 4-diphosphocytidyl-2-C-methyl-D-erythritol from CTP and 2-C-methyl-D-erythritol 4-phosphate (MEP). The protein is 2-C-methyl-D-erythritol 4-phosphate cytidylyltransferase of Geotalea uraniireducens (strain Rf4) (Geobacter uraniireducens).